Here is a 476-residue protein sequence, read N- to C-terminus: MLVLLLHAVVLGLPSAWAVGACARACPAACACSTVERGCSVRCDRAGLLRVPAELPCEAVSIDLDRNGLRFLGERAFGTLPSLRRLSLRHNNLSFITPGAFKGLPRLAELRLAHNGDLRYLHARTFAALSRLRRLDLAACRLFSVPERLLAELPALRELAAFDNLFRRVPGALRGLANLTHAHLERGRIEAVASSSLQGLRRLRSLSLQANRVRAVHAGAFGDCGVLEHLLLNDNLLAELPADAFRGLRRLRTLNLGGNALDRVARAWFADLAELELLYLDRNSIAFVEEGAFQNLSGLLALHLNGNRLTVLAWVAFQPGFFLGRLFLFRNPWCCDCRLEWLRDWMEGSGRVTDVPCASPGSVAGLDLSQVTFGRSSDGLCVDPEELNLTTSSPGPSPEPAATTVSRFSSLLSKLLAPRVPVEEAANTTGGLANASLSDSLSSRGVGGAGRQPWFLLASCLLPSVAQHVVFGLQMD.

A signal peptide spans Met1–Ala18. LRR repeat units lie at residues Val60–Arg84, Arg85–Ala108, Leu110–Arg133, Arg134–Arg157, Leu159–His181, Ala182–Arg204, Ser205–Glu228, His229–Arg252, Leu254–Glu276, Leu277–Leu300, and Leu302–Gly324. Asn92 carries an N-linked (GlcNAc...) asparagine glycan. Asn178 carries N-linked (GlcNAc...) asparagine glycosylation. Residue Asn295 is glycosylated (N-linked (GlcNAc...) asparagine). Residues Asp336 to Leu387 form the LRRCT domain. Residues Asn388, Asn427, and Asn434 are each glycosylated (N-linked (GlcNAc...) asparagine).

The protein belongs to the small leucine-rich proteoglycan (SLRP) family. SLRP class IV subfamily. Expressed in kidney and retina. Also at low levels in brain, testis and muscle. Within the retina, expressed in the inner segment of photoreceptors, outer and inner nuclear layers and the ganglion cell layer.

It is found in the secreted. The protein resides in the extracellular space. Its subcellular location is the extracellular matrix. The chain is Nyctalopin (NYX) from Homo sapiens (Human).